The primary structure comprises 383 residues: Queuine tRNA-ribosyltransferase (383 aa).

Aspartate 90 acts as the Proton acceptor in catalysis. Substrate-binding positions include 90-94 (DSGGF), aspartate 144, glutamine 193, and glycine 227. The tract at residues 258-264 (GVGTPED) is RNA binding. Aspartate 277 (nucleophile) is an active-site residue. The segment at 282-286 (TRNAR) is RNA binding; important for wobble base 34 recognition. 4 residues coordinate Zn(2+): cysteine 315, cysteine 317, cysteine 320, and histidine 346.

This sequence belongs to the queuine tRNA-ribosyltransferase family. In terms of assembly, homodimer. Within each dimer, one monomer is responsible for RNA recognition and catalysis, while the other monomer binds to the replacement base PreQ1. The cofactor is Zn(2+).

It catalyses the reaction 7-aminomethyl-7-carbaguanine + guanosine(34) in tRNA = 7-aminomethyl-7-carbaguanosine(34) in tRNA + guanine. It participates in tRNA modification; tRNA-queuosine biosynthesis. In terms of biological role, catalyzes the base-exchange of a guanine (G) residue with the queuine precursor 7-aminomethyl-7-deazaguanine (PreQ1) at position 34 (anticodon wobble position) in tRNAs with GU(N) anticodons (tRNA-Asp, -Asn, -His and -Tyr). Catalysis occurs through a double-displacement mechanism. The nucleophile active site attacks the C1' of nucleotide 34 to detach the guanine base from the RNA, forming a covalent enzyme-RNA intermediate. The proton acceptor active site deprotonates the incoming PreQ1, allowing a nucleophilic attack on the C1' of the ribose to form the product. After dissociation, two additional enzymatic reactions on the tRNA convert PreQ1 to queuine (Q), resulting in the hypermodified nucleoside queuosine (7-(((4,5-cis-dihydroxy-2-cyclopenten-1-yl)amino)methyl)-7-deazaguanosine). The chain is Queuine tRNA-ribosyltransferase from Ralstonia pickettii (strain 12J).